We begin with the raw amino-acid sequence, 103 residues long: Co-chaperonin GroES (103 aa).

Belongs to the GroES chaperonin family. Heptamer of 7 subunits arranged in a ring. Interacts with the chaperonin GroEL.

Its subcellular location is the cytoplasm. Together with the chaperonin GroEL, plays an essential role in assisting protein folding. The GroEL-GroES system forms a nano-cage that allows encapsulation of the non-native substrate proteins and provides a physical environment optimized to promote and accelerate protein folding. GroES binds to the apical surface of the GroEL ring, thereby capping the opening of the GroEL channel. This is Co-chaperonin GroES from Prochlorococcus marinus (strain MIT 9313).